The following is a 189-amino-acid chain: MTSFVFVTGNANKLREVKAILAAGDSGIEVTSQSVDVPELQGTTQEIAIAKCKVAAEKLGTACVTEDTALCFEALNGLPGPYIKDFLANIGHEGLNTLLNGFPTTRATALCTFAYSPGPGEEPILFEGRTEGNIVPARGSKVFGWDPIFQPLEGGGRTYAEMDGEEKNKISHRYRALEKLRAYLSEQAK.

Threonine 8–lysine 13 provides a ligand contact to ITP. Glutamate 39 is a Mg(2+) binding site. ITP contacts are provided by residues lysine 51, aspartate 67–threonine 68, lysine 84, phenylalanine 143–aspartate 146, lysine 167, and histidine 172–arginine 173.

Belongs to the HAM1 NTPase family. As to quaternary structure, homodimer. It depends on Mg(2+) as a cofactor. Requires Mn(2+) as cofactor.

The protein localises to the cytoplasm. Its subcellular location is the nucleus. It catalyses the reaction ITP + H2O = IMP + diphosphate + H(+). The enzyme catalyses dITP + H2O = dIMP + diphosphate + H(+). It carries out the reaction XTP + H2O = XMP + diphosphate + H(+). In terms of biological role, pyrophosphatase that hydrolyzes non-canonical purine nucleotides such as inosine triphosphate (ITP), deoxyinosine triphosphate (dITP) or xanthosine 5'-triphosphate (XTP) to their respective monophosphate derivatives. The enzyme does not distinguish between the deoxy- and ribose forms. Probably excludes non-canonical purines from RNA and DNA precursor pools, thus preventing their incorporation into RNA and DNA and avoiding chromosomal lesions. The protein is Inosine triphosphate pyrophosphatase of Cryptococcus neoformans var. neoformans serotype D (strain JEC21 / ATCC MYA-565) (Filobasidiella neoformans).